We begin with the raw amino-acid sequence, 119 residues long: Large ribosomal subunit protein bL20 (119 aa).

This sequence belongs to the bacterial ribosomal protein bL20 family.

In terms of biological role, binds directly to 23S ribosomal RNA and is necessary for the in vitro assembly process of the 50S ribosomal subunit. It is not involved in the protein synthesizing functions of that subunit. This chain is Large ribosomal subunit protein bL20, found in Halalkalibacterium halodurans (strain ATCC BAA-125 / DSM 18197 / FERM 7344 / JCM 9153 / C-125) (Bacillus halodurans).